The sequence spans 588 residues: Aspartate--tRNA ligase (588 aa).

Glu-172 provides a ligand contact to L-aspartate. Residues 196–199 (QLFK) form an aspartate region. Arg-218 contacts L-aspartate. ATP contacts are provided by residues 218–220 (RDE) and Gln-227. His-449 is an L-aspartate binding site. Position 483 (Glu-483) interacts with ATP. Position 490 (Arg-490) interacts with L-aspartate. 535 to 538 (GLDR) is a binding site for ATP.

This sequence belongs to the class-II aminoacyl-tRNA synthetase family. Type 1 subfamily. Homodimer.

It is found in the cytoplasm. It catalyses the reaction tRNA(Asp) + L-aspartate + ATP = L-aspartyl-tRNA(Asp) + AMP + diphosphate. Catalyzes the attachment of L-aspartate to tRNA(Asp) in a two-step reaction: L-aspartate is first activated by ATP to form Asp-AMP and then transferred to the acceptor end of tRNA(Asp). This Pasteurella multocida (strain Pm70) protein is Aspartate--tRNA ligase.